Here is a 141-residue protein sequence, read N- to C-terminus: Nucleoside diphosphate kinase (141 aa).

K11, Y59, R87, T93, R104, and N114 together coordinate ATP. H117 (pros-phosphohistidine intermediate) is an active-site residue.

It belongs to the NDK family. Homotetramer. Requires Mg(2+) as cofactor.

The protein localises to the cytoplasm. It carries out the reaction a 2'-deoxyribonucleoside 5'-diphosphate + ATP = a 2'-deoxyribonucleoside 5'-triphosphate + ADP. It catalyses the reaction a ribonucleoside 5'-diphosphate + ATP = a ribonucleoside 5'-triphosphate + ADP. Functionally, major role in the synthesis of nucleoside triphosphates other than ATP. The ATP gamma phosphate is transferred to the NDP beta phosphate via a ping-pong mechanism, using a phosphorylated active-site intermediate. This is Nucleoside diphosphate kinase from Orientia tsutsugamushi (strain Boryong) (Rickettsia tsutsugamushi).